A 188-amino-acid chain; its full sequence is MLENLVESLRNAPVVKKGDYDYFVHGISDGIPALNPCVLKEISEVLAERIDLDKVDKIVGVEAMGIHIATALSLETGLPLLVIRKREYGLEGEHEILKHTGYATSKLYINDLNEGDNIVLVDDVVSTGGTLSVVINELKAIGVNILDTFVVVEKGEGKKIVEDKTGENIVTLVKLDVVDGKVVADSLI.

Belongs to the purine/pyrimidine phosphoribosyltransferase family. Archaeal HPRT subfamily. In terms of assembly, homodimer.

The protein resides in the cytoplasm. It catalyses the reaction IMP + diphosphate = hypoxanthine + 5-phospho-alpha-D-ribose 1-diphosphate. The catalysed reaction is GMP + diphosphate = guanine + 5-phospho-alpha-D-ribose 1-diphosphate. Its pathway is purine metabolism; IMP biosynthesis via salvage pathway; IMP from hypoxanthine: step 1/1. Functionally, catalyzes a salvage reaction resulting in the formation of IMP that is energically less costly than de novo synthesis. This chain is Hypoxanthine/guanine phosphoribosyltransferase, found in Methanobrevibacter ruminantium (strain ATCC 35063 / DSM 1093 / JCM 13430 / OCM 146 / M1) (Methanobacterium ruminantium).